The chain runs to 255 residues: dTDP-3-amino-3,6-dideoxy-alpha-D-glucopyranose N,N-dimethyltransferase (255 aa).

S-adenosyl-L-methionine is bound by residues Y14, Y22, Y33, A58, 58 to 59, E79, 101 to 102, and M117; these read AC and DM.

The protein belongs to the methyltransferase TylM1/DesVI family. As to quaternary structure, homodimer.

The catalysed reaction is dTDP-3-amino-3,6-dideoxy-alpha-D-glucose + 2 S-adenosyl-L-methionine = dTDP-alpha-D-mycaminose + 2 S-adenosyl-L-homocysteine + 2 H(+). It participates in antibiotic biosynthesis; tylosin biosynthesis. S-adenosyl-L-methionine-dependent methyltransferase involved in the biosynthesis of mycaminose, an essential structural component of the macrolide antibiotic tylosin. Involved in the last step in mycaminose biosynthesis by mediating dimethylation of the hexose C-3' amino group. This chain is dTDP-3-amino-3,6-dideoxy-alpha-D-glucopyranose N,N-dimethyltransferase (tylM1), found in Streptomyces fradiae (Streptomyces roseoflavus).